We begin with the raw amino-acid sequence, 67 residues long: Small ribosomal subunit protein eS17 (67 aa).

This sequence belongs to the eukaryotic ribosomal protein eS17 family.

The chain is Small ribosomal subunit protein eS17 from Thermococcus onnurineus (strain NA1).